A 745-amino-acid polypeptide reads, in one-letter code: uncharacterized protein (745 aa).

Residues 158–256 enclose the HTH araC/xylS-type domain; the sequence is NQVCDYIELH…HQTPKQYRGD (99 aa). DNA-binding regions (H-T-H motif) lie at residues 175–196 and 223–246; these read SELSEYVGWSESHLSKKFTESL and ITDIALQNGFSSAASFARTFKHFT.

This is an uncharacterized protein from Staphylococcus aureus (strain Mu50 / ATCC 700699).